We begin with the raw amino-acid sequence, 343 residues long: Anthranilate phosphoribosyltransferase (343 aa).

5-phospho-alpha-D-ribose 1-diphosphate is bound by residues G81, 84–85 (GD), 91–94 (NVST), 109–117 (KHGNRSVSS), and S121. G81 contributes to the anthranilate binding site. Position 93 (S93) interacts with Mg(2+). N112 serves as a coordination point for anthranilate. Position 167 (R167) interacts with anthranilate. Residues D226 and E227 each coordinate Mg(2+).

It belongs to the anthranilate phosphoribosyltransferase family. Homodimer. It depends on Mg(2+) as a cofactor.

The enzyme catalyses N-(5-phospho-beta-D-ribosyl)anthranilate + diphosphate = 5-phospho-alpha-D-ribose 1-diphosphate + anthranilate. Its pathway is amino-acid biosynthesis; L-tryptophan biosynthesis; L-tryptophan from chorismate: step 2/5. Functionally, catalyzes the transfer of the phosphoribosyl group of 5-phosphorylribose-1-pyrophosphate (PRPP) to anthranilate to yield N-(5'-phosphoribosyl)-anthranilate (PRA). This chain is Anthranilate phosphoribosyltransferase, found in Chromohalobacter salexigens (strain ATCC BAA-138 / DSM 3043 / CIP 106854 / NCIMB 13768 / 1H11).